A 239-amino-acid polypeptide reads, in one-letter code: Lipoprotein-releasing system ATP-binding protein LolD (239 aa).

The 230-residue stretch at 10–239 (VELSGVRKDY…ADGPHRRSGA (230 aa)) folds into the ABC transporter domain. 46 to 53 (GPSGSGKS) contributes to the ATP binding site.

It belongs to the ABC transporter superfamily. Lipoprotein translocase (TC 3.A.1.125) family. The complex is composed of two ATP-binding proteins (LolD) and two transmembrane proteins (LolC and LolE).

It localises to the cell inner membrane. In terms of biological role, part of the ABC transporter complex LolCDE involved in the translocation of mature outer membrane-directed lipoproteins, from the inner membrane to the periplasmic chaperone, LolA. Responsible for the formation of the LolA-lipoprotein complex in an ATP-dependent manner. This is Lipoprotein-releasing system ATP-binding protein LolD from Anaeromyxobacter dehalogenans (strain 2CP-C).